The primary structure comprises 97 residues: Coiled-coil domain-containing protein 167 (97 aa).

Positions 10–79 (GVALEIDGLE…LRQENRKNML (70 aa)) form a coiled coil. Residues 78–95 (MLLSVAIFILLTLVYAYW) traverse the membrane as a helical segment.

The protein resides in the membrane. This Homo sapiens (Human) protein is Coiled-coil domain-containing protein 167 (CCDC167).